Here is a 256-residue protein sequence, read N- to C-terminus: Undecaprenyl-diphosphatase (256 aa).

A run of 8 helical transmembrane segments spans residues 5 to 25, 41 to 61, 74 to 94, 100 to 120, 135 to 155, 180 to 200, 208 to 228, and 234 to 254; these read IIEI…PISS, NSLM…VFYF, LLSL…VISS, LLEN…IILY, LNFK…IPGV, FLLA…NAIG, LVLI…KFFL, and FSLN…FIII.

Belongs to the UppP family.

The protein localises to the cell inner membrane. The catalysed reaction is di-trans,octa-cis-undecaprenyl diphosphate + H2O = di-trans,octa-cis-undecaprenyl phosphate + phosphate + H(+). Its function is as follows. Catalyzes the dephosphorylation of undecaprenyl diphosphate (UPP). Confers resistance to bacitracin. This is Undecaprenyl-diphosphatase from Pelagibacter ubique (strain HTCC1062).